The sequence spans 125 residues: MKVLEDLYYSKDHVWVKVEGDKAYIGITDYAQDSLGDAEYIELPEVGTEFTAGDVLGVIESAKAASDVYIPVDGEVIEVNNAVAEDPSLVNSDPYGSWLVAVRLKDKAQVEKLMKAEEYKKFLET.

The Lipoyl-binding domain occupies 22 to 103; it reads KAYIGITDYA…PYGSWLVAVR (82 aa). The residue at position 63 (Lys-63) is an N6-lipoyllysine.

This sequence belongs to the GcvH family. As to quaternary structure, the glycine cleavage system is composed of four proteins: P, T, L and H. The cofactor is (R)-lipoate.

Functionally, the glycine cleavage system catalyzes the degradation of glycine. The H protein shuttles the methylamine group of glycine from the P protein to the T protein. This Caldanaerobacter subterraneus subsp. tengcongensis (strain DSM 15242 / JCM 11007 / NBRC 100824 / MB4) (Thermoanaerobacter tengcongensis) protein is Glycine cleavage system H protein 1.